We begin with the raw amino-acid sequence, 63 residues long: Small ribosomal subunit protein bS21 (63 aa).

It belongs to the bacterial ribosomal protein bS21 family.

This Porphyromonas gingivalis (strain ATCC 33277 / DSM 20709 / CIP 103683 / JCM 12257 / NCTC 11834 / 2561) protein is Small ribosomal subunit protein bS21.